The primary structure comprises 359 residues: Peroxisome assembly protein 12 (359 aa).

Topologically, residues 1–19 (MAEHGAHFTAASVADDQPS) are peroxisomal matrix. A helical transmembrane segment spans residues 20-47 (IFEVVAQDSLMTAVRPALQHVVKVLAES). The Cytoplasmic portion of the chain corresponds to 48–51 (NPTH). The helical transmembrane segment at 52 to 76 (YGFLWRWFDEIFTLLDLLLQQHYLS) threads the bilayer. At 77–109 (RTSASFSENFYGLKRIVMGDTHKSQRLASAGLP) the chain is on the peroxisomal matrix side. The chain crosses the membrane as a helical span at residues 110 to 139 (KQQLWKSIMFLVLLPYLKVKLEKLVSSLRE). Topologically, residues 140 to 144 (EDEYS) are cytoplasmic. Residues 145–183 (IHPPSSRWKRFYRAFLAAYPFVNMAWEGWFLVQQLRYIL) form a helical membrane-spanning segment. The Peroxisomal matrix segment spans residues 184–249 (GKAQHHSPLL…VGGVALSLST (66 aa)). Residues 250–277 (GLSVGVFFLQFLDWWYSSENQETIKSLT) traverse the membrane as a helical segment. Over 278 to 359 (ALPTPPPPVH…HLIKLYSPEN (82 aa)) the chain is Cytoplasmic. Residues Cys-304, Cys-307, Cys-325, and Cys-328 each contribute to the Zn(2+) site. The RING-type; degenerate zinc-finger motif lies at 304–343 (CPLCRKTRVNDTVLATSGYVFCYRCVFHYVRSHQACPITG).

This sequence belongs to the pex2/pex10/pex12 family. Component of the PEX2-PEX10-PEX12 retrotranslocation channel, composed of PEX2, PEX10 and PEX12. Interacts with PEX19 via its cytoplasmic domain.

The protein localises to the peroxisome membrane. The protein operates within protein modification; protein ubiquitination. Its function is as follows. Component of a retrotranslocation channel required for peroxisome organization by mediating export of the PEX5 receptor from peroxisomes to the cytosol, thereby promoting PEX5 recycling. The retrotranslocation channel is composed of PEX2, PEX10 and PEX12; each subunit contributing transmembrane segments that coassemble into an open channel that specifically allows the passage of PEX5 through the peroxisomal membrane. PEX12 also regulates PEX5 recycling by activating the E3 ubiquitin-protein ligase activity of PEX10. When PEX5 recycling is compromised, PEX12 stimulates PEX10-mediated polyubiquitination of PEX5, leading to its subsequent degradation. This is Peroxisome assembly protein 12 from Homo sapiens (Human).